The primary structure comprises 474 residues: Pyruvate kinase (474 aa).

R37 is a substrate binding site. Residues N39, S41, and D71 each coordinate K(+). 39 to 42 is a binding site for ATP; it reads NFSH. Positions 78 and 160 each coordinate ATP. E222 provides a ligand contact to Mg(2+). Substrate contacts are provided by G245, D246, and T278. Mg(2+) is bound at residue D246.

The protein belongs to the pyruvate kinase family. As to quaternary structure, homotetramer. The cofactor is Mg(2+). K(+) serves as cofactor.

It catalyses the reaction pyruvate + ATP = phosphoenolpyruvate + ADP + H(+). Its pathway is carbohydrate degradation; glycolysis; pyruvate from D-glyceraldehyde 3-phosphate: step 5/5. In Agrobacterium vitis (Rhizobium vitis), this protein is Pyruvate kinase (ttuE).